We begin with the raw amino-acid sequence, 252 residues long: CLAVATA3/ESR (CLE)-related protein 4A-2 (252 aa).

Positions methionine 1–alanine 21 are cleaved as a signal peptide. The segment at alanine 21–methionine 83 is required for secretion from the host cytoplasm to the host apoplasm. A glycan (N-linked (GlcNAc...) asparagine) is linked at asparagine 32. The disordered stretch occupies residues arginine 116–histidine 252. 4 stretches are compositionally biased toward basic and acidic residues: residues histidine 125–valine 137, proline 144–valine 179, proline 186–alanine 200, and proline 207–glycine 242. The A-1 repeat unit spans residues glutamate 127 to lysine 135. The 6 X approximate repeat A stretch occupies residues glutamate 127–lysine 219. The stretch at arginine 136 to histidine 147 is one CLE-1 repeat. Residues arginine 136–histidine 252 are 6 X approximate repeat CLE. The stretch at glutamine 148–lysine 156 is one A-2 repeat. Residues arginine 157–histidine 168 form a CLE-2 repeat. One copy of the A-3 repeat lies at glutamate 169–lysine 177. One copy of the CLE-3 repeat lies at arginine 178 to histidine 189. The stretch at glutamine 190 to lysine 198 is one A-4 repeat. The stretch at arginine 199–histidine 210 is one CLE-4 repeat. Residues glutamate 211–lysine 219 form an A-5 repeat. The stretch at arginine 220–histidine 231 is one CLE-5 repeat. The stretch at glutamate 232–lysine 240 is one A-6 repeat. Residues arginine 241 to histidine 252 form a CLE-6 repeat.

This sequence belongs to the CLV3/ESR signal peptide family. In terms of tissue distribution, highly expressed exclusively within the dorsal esophageal gland cell during syncytium formation in host plants.

It localises to the secreted. The protein resides in the host cytoplasm. Its subcellular location is the host extracellular space. It is found in the extracellular space. The protein localises to the apoplast. Mimics host plant CLE extracellular signal peptides that regulate cell fate. May play a role in the differentiation or division of feeding cells (syncytia) induced in plant roots during infection. The polypeptide is CLAVATA3/ESR (CLE)-related protein 4A-2 (CLE-4A-2) (Globodera rostochiensis (Golden nematode worm)).